A 661-amino-acid chain; its full sequence is Bifunctional xylanase/xylan deacetylase (661 aa).

An N-terminal signal peptide occupies residues 1 to 27 (MKLPTLGKCVVRTLMGAVALGAISVNA). Positions 29–226 (TLSSNSTGTN…SRGSSDITVS (198 aa)) constitute a GH11 domain. The Nucleophile; for endoxylanase activity role is filled by glutamate 116. Catalysis depends on glutamate 213, which acts as the Proton donor; for endoxylanase activity. Residues 220-259 (SSDITVSEGTSGGGTSSVGGASSSVNSSTGGGSSGGITVR) form a disordered region. Over residues 237–247 (VGGASSSVNSS) the composition is skewed to low complexity. Positions 394–577 (SNCSGYVGIT…AKGLCPGRID (184 aa)) are polysaccharide deacetylase. The region spanning 398-574 (GYVGITFDDG…NLRAKGLCPG (177 aa)) is the NodB homology domain. The interval 578–610 (PNTGRAVAPSSSGGSSSVALSSSSRSSSSAGGN) is disordered. Positions 581–608 (GRAVAPSSSGGSSSVALSSSSRSSSSAG) are enriched in low complexity. The 30-residue stretch at 616–645 (QCNWWGTFYPLCQTQTSGWGWENSRSCIST) folds into the CBM10 domain.

The protein in the N-terminal section; belongs to the glycosyl hydrolase 11 (cellulase G) family.

It is found in the secreted. The catalysed reaction is Endohydrolysis of (1-&gt;4)-beta-D-xylosidic linkages in xylans.. It carries out the reaction Deacetylation of xylans and xylo-oligosaccharides.. It functions in the pathway glycan degradation; xylan degradation. Its function is as follows. Endo-acting xylanase which specifically cleaves internal linkages on the xylan backbone, releasing xylooligosaccharides. Is able to hydrolyze oat spelt xylan and the arabinoxylans from wheat and rye, releasing xylobiose as the major product. Also likely catalyzes, via its C-terminal domain, the removal of acetyl groups from acetylated xylan. Thus, has the capability of hydrolyzing acetylated xylan. Does not attack mannan, galactan, arabinan or any cellulosic substrates. The polypeptide is Bifunctional xylanase/xylan deacetylase (xyn11A) (Cellvibrio japonicus (Pseudomonas fluorescens subsp. cellulosa)).